Consider the following 198-residue polypeptide: Glycerol-3-phosphate acyltransferase (198 aa).

5 consecutive transmembrane segments (helical) span residues 2 to 22, 55 to 75, 88 to 108, 118 to 138, and 162 to 182; these read IIVIITVMVSFLCGSIPTGYL, MITQVMDILKGIIPVLLCMLI, YLSIIVIAVILGHDYTPFLGF, VGAFFLLAPAAVLAGAVVYFV, and IALRLPIEITVCAIIACGLLI.

This sequence belongs to the PlsY family. Probably interacts with PlsX.

It localises to the cell membrane. The catalysed reaction is an acyl phosphate + sn-glycerol 3-phosphate = a 1-acyl-sn-glycero-3-phosphate + phosphate. It participates in lipid metabolism; phospholipid metabolism. Its function is as follows. Catalyzes the transfer of an acyl group from acyl-phosphate (acyl-PO(4)) to glycerol-3-phosphate (G3P) to form lysophosphatidic acid (LPA). This enzyme utilizes acyl-phosphate as fatty acyl donor, but not acyl-CoA or acyl-ACP. This Clostridium acetobutylicum (strain ATCC 824 / DSM 792 / JCM 1419 / IAM 19013 / LMG 5710 / NBRC 13948 / NRRL B-527 / VKM B-1787 / 2291 / W) protein is Glycerol-3-phosphate acyltransferase.